The sequence spans 2864 residues: Genome polyprotein (2864 aa).

Polar residues-rich tracts occupy residues 1–10 (MPVISTQTSP) and 21–32 (QTQASYPVSIKT). Residues 1-49 (MPVISTQTSPVPAPRTRKNKQTQASYPVSIKTSVERGQRAKRKVQRDAR) are disordered. A helical membrane pass occupies residues 133–153 (WATGWFGVHLFVVCLLSLACP). 3 N-linked (GlcNAc...) asparagine; by host glycosylation sites follow: Asn165, Asn212, and Asn264. The helical transmembrane segment at 324–344 (LIYYASRGKWYQLLLALMLYI) threads the bilayer. N-linked (GlcNAc...) asparagine; by host glycosylation is found at Asn380, Asn400, Asn422, Asn446, Asn467, and Asn512. 5 consecutive transmembrane segments (helical) span residues 582–602 (AVVLILLGLCGSKYLILAYLC), 628–648 (AGWDVLSKAQVAPFALIFFIC), 660–680 (LLGFVPMAAGLPLTFFVAAAA), 706–726 (PRIALLVGPWPLVALLTLLHL), and 737–757 (IIGGLTIPPVVALVVMSRFGF). Residue Asn782 is glycosylated (N-linked (GlcNAc...) asparagine; by host). A run of 2 helical transmembrane segments spans residues 790 to 810 (FLLVLVCFPGATYDTLVTFCV) and 847 to 867 (WYSHYVLKFFLLVFGENGVFF). One can recognise a Peptidase C18 domain in the interval 819-940 (TSSAASFFGT…AMPPDGWAIT (122 aa)). Active-site for protease NS2 activity; shared with dimeric partner residues include His870, Glu888, and Cys909. The region spanning 941–1122 (APFTLQCLSE…VCAGYHPQYT (182 aa)) is the Peptidase S29 domain. Active-site charge relay system; for serine protease NS3 activity residues include His997 and Asp1021. Residues Cys1037 and Cys1039 each contribute to the Zn(2+) site. A glycan (N-linked (GlcNAc...) asparagine; by host) is linked at Asn1057. The active-site Charge relay system; for serine protease NS3 activity is the Ser1079. Zn(2+) contacts are provided by Cys1085 and His1089. Residues 1131–1281 (PTVPNEYSVQ…ANITEIQLTD (151 aa)) form the Helicase ATP-binding domain. Residue 1144-1151 (APTGSGKS) participates in ATP binding. The Mg(2+) site is built by Ser1151 and Glu1229. Residues 1228-1231 (DECH) carry the DECH box motif. Asn1273 carries N-linked (GlcNAc...) asparagine; by host glycosylation. A Helicase C-terminal domain is found at 1284 to 1449 (TIPFHGKKIK…GLSSTEAQTI (166 aa)). An N-linked (GlcNAc...) asparagine; by host glycan is attached at Asn1559. 5 helical membrane passes run 1565–1585 (ALAVGVGVAMAYLAIDTFGAT), 1653–1673 (FLGPHAATILAIIEYCCGLVT), 1678–1698 (PFASCVFAFIAGITTPLPHKI), 1722–1742 (FMMAGAAGTALGTWTSVGFVF), and 1783–1803 (AAGVVGVLSACAMFALTTAGP). A lipid anchor (S-palmitoyl cysteine; by host) is attached at Cys1863. The chain crosses the membrane as a helical span at residues 1864–1884 (GLIAWGLEIWQYVCNFFVICF). Zn(2+) is bound by residues Cys1905, Cys1923, Cys1925, and Cys1947. Disordered regions lie at residues 2139–2178 (TGSLTLPPPPRSVPGVSCPESLQRSDPLEGPSNLPSSPPV) and 2209–2266 (GPDD…TKKK). A compositionally biased stretch (polar residues) spans 2226-2240 (SDGSWSTTTTASSYV). A RdRp catalytic domain is found at 2485-2603 (AVGATCDTVC…IWKSAGADAD (119 aa)). Mg(2+)-binding residues include Asp2491, Asp2589, and Asp2590. Residues Asn2640 and Asn2722 are each glycosylated (N-linked (GlcNAc...) asparagine; by host). A helical membrane pass occupies residues 2844 to 2864 (VKYLAVIVFALGLIAVGLAIS).

As to quaternary structure, homooligomer. Interacts with E1 (via C-terminus). Interacts with the non-structural protein 5A. Part of the viral assembly initiation complex composed of NS2, E1, E2, NS3, NS4A, NS5A and the core protein. In terms of assembly, forms a heterodimer with envelope glycoprotein E2. Interacts with the core protein. Interacts with protease NS2. Part of the viral assembly initiation complex composed of NS2, E1, E2, NS3, NS4A, NS5A and the core protein. Forms a heterodimer with envelope glycoprotein E1. Part of the viral assembly initiation complex composed of NS2, E1, E2, NS3, NS4A, NS5A and the core protein. As to quaternary structure, homodimer. Interacts with envelope glycoprotein E1. Interacts with envelope glycoprotein E2. Interacts with viroporin p7. Interacts with serine protease/helicase NS3. Part of the replication complex composed of NS2, NS3, NS4A, NS4B, NS5A and the RNA-directed RNA polymerase embedded in an ER-derived membranous web. Part of the viral assembly initiation complex composed of NS2, E1, E2, NS3, NS4A, NS5A and the core protein. In terms of assembly, interacts with protease NS2. Interacts with non-structural protein 4A; this interaction stabilizes the folding of NS3 serine protease. NS3-NS4A interaction is essential for NS3 activation and allows membrane anchorage of the latter. Interacts with host MAVS; this interaction leads to the cleavage and inhibition of host MAVS. Part of the replication complex composed of NS2, NS3, NS4A, NS4B, NS5A and the RNA-directed RNA polymerase embedded in an ER-derived membranous web. Part of the viral assembly initiation complex composed of NS2, E1, E2, NS3, NS4A, NS5A and the core protein. Interacts with NS3 serine protease; this interaction stabilizes the folding of NS3 serine protease. NS3-NS4A interaction is essential for NS3 activation and allows membrane anchorage of the latter. Interacts with non-structural protein 5A (via N-terminus). Part of the replication complex composed of NS2, NS3, NS4A, NS4B, NS5A and the RNA-directed RNA polymerase embedded in an ER-derived membranous web. Part of the viral assembly initiation complex composed of NS2, E1, E2, NS3, NS4A, NS5A and the core protein. As to quaternary structure, monomer. Homodimer; dimerization is required for RNA-binding. Interacts with the core protein. Interacts (via N-terminus) with non-structural protein 4A. Interacts with non-structural protein 4B. Interacts with RNA-directed RNA polymerase. Part of the viral assembly initiation complex composed of NS2, E1, E2, NS3, NS4A, NS5A and the core protein. Part of the replication complex composed of NS2, NS3, NS4A, NS4B, NS5A and the RNA-directed RNA polymerase. Zn(2+) serves as cofactor. It depends on Mg(2+) as a cofactor. The cofactor is Mn(2+). Post-translationally, specific enzymatic cleavages in vivo yield mature proteins. The structural proteins, core, E1, E2 and p7 are produced by proteolytic processing by host signal peptidases. The other proteins (p7, NS2, NS3, NS4A, NS4B, NS5A and NS5B) are cleaved by the viral proteases. Autoprocessing between NS2 and NS3 is mediated by the NS2 cysteine protease catalytic domain and regulated by the NS3 N-terminal domain. P13 may be further cleaved into p6 and p7 if the internal cleavage site is used. Highly N-glycosylated. In terms of processing, palmitoylated. This modification may play a role in its polymerization or in protein-protein interactions.

The protein resides in the virion. It is found in the host cytoplasm. The protein localises to the host lipid droplet. It localises to the virion membrane. Its subcellular location is the host endoplasmic reticulum membrane. The protein resides in the host perinuclear region. It is found in the host mitochondrion. The protein localises to the host nucleus. The catalysed reaction is Hydrolysis of four peptide bonds in the viral precursor polyprotein, commonly with Asp or Glu in the P6 position, Cys or Thr in P1 and Ser or Ala in P1'.. It carries out the reaction a ribonucleoside 5'-triphosphate + H2O = a ribonucleoside 5'-diphosphate + phosphate + H(+). The enzyme catalyses ATP + H2O = ADP + phosphate + H(+). It catalyses the reaction RNA(n) + a ribonucleoside 5'-triphosphate = RNA(n+1) + diphosphate. Functionally, packages viral RNA to form a viral nucleocapsid, and promotes virion budding. Participates in the viral particle production as a result of its interaction with the non-structural protein 5A. Binds RNA and may function as a RNA chaperone to induce the RNA structural rearrangements taking place during virus replication. Modulates viral translation initiation by interacting with viral IRES and 40S ribosomal subunit. Probably affects various cell signaling pathways, host immunity and lipid metabolism. Its function is as follows. Forms a heterodimer with envelope glycoprotein E2, which mediates virus attachment to the host cell, virion internalization through clathrin-dependent endocytosis and fusion with host membrane. Fusion with the host cell is most likely mediated by both E1 and E2, through conformational rearrangements of the heterodimer required for fusion rather than a classical class II fusion mechanism. Forms a heterodimer with envelope glycoprotein E1, which mediates virus attachment to the host cell, virion internalization through clathrin-dependent endocytosis and fusion with host membrane. Fusion with the host cell is most likely mediated by both E1 and E2, through conformational rearrangements of the heterodimer required for fusion rather than a classical class II fusion mechanism. In terms of biological role, may function as a multimeric ion channel protein (viroporin). Functionally, cysteine protease required for the proteolytic auto-cleavage between the non-structural proteins NS2 and NS3. The N-terminus of NS3 is required for the function of NS2 protease (active region NS2-3). Promotes the initiation of viral particle assembly by mediating the interaction between structural and non-structural proteins. Its function is as follows. Displays three enzymatic activities: serine protease with a chymotrypsin-like fold, NTPase and RNA helicase. NS3 serine protease, in association with NS4A, is responsible for the cleavages of NS3-NS4A, NS4A-NS4B, NS4B-NS5A and NS5A-NS5B. The NS3/NS4A complex prevents phosphorylation of host IRF3, thus preventing the establishment of dsRNA induced antiviral state. NS3 RNA helicase binds to RNA and unwinds both dsDNA and dsRNA in the 3' to 5' direction, and likely resolves RNA complicated stable secondary structures in the template strand. Cleaves host MAVS/CARDIF thereby preventing the establishment of an antiviral state. Induces a specific membrane alteration that serves as a scaffold for the virus replication complex. This membrane alteration gives rise to the so-called ER-derived membranous web that contains the replication complex. NS4B self-interaction contributes to its function in membranous web formation. In terms of biological role, phosphorylated protein that is indispensable for viral replication and assembly. Functionally, RNA-dependent RNA polymerase that performs primer-template recognition and RNA synthesis during viral replication. Initiates RNA transcription/replication at a flavin adenine dinucleotide (FAD), resulting in a 5'- FAD cap on viral RNAs. In this way, recognition of viral 5' RNA by host pattern recognition receptors can be bypassed, thereby evading activation of antiviral pathways. In Hepatitis GB virus B (GBV-B), this protein is Genome polyprotein.